We begin with the raw amino-acid sequence, 927 residues long: Roc-COR-CHAT protease (927 aa).

LRR repeat units follow at residues 38-61 (AGQV…TEAQ), 83-107 (LPHL…GFRS), 109-125 (QQVY…VFEG), and 127-151 (CPAL…GFRA). An LRR 5 region spans residues 152-170 (LKYIYATNNVLQKITFNRS). 2 LRR repeats span residues 171–194 (MRLL…LSEI) and 195–217 (ETME…IWDR). The 188-residue stretch at 436 to 623 (EWLGVKEDLN…ELRWKKGVVL (188 aa)) folds into the COR domain. Catalysis depends on residues His796 and Cys840.

In terms of biological role, a dedicated protease for gasdermin bGSDM; cleaves the bGSDM precursor, releasing the pore-forming moiety, which integrates into the membrane and triggers cell death. Probably involved in defense against bacteriophages. Expression of bGSDM and this neighboring protease is highly toxic in E.coli. Cells expressing the gene pair stop dividing and lose membrane integrity. Both proteins are required to kill E.coli. The bGSDM recognition site is larger than the 8 residues surrounding the cleavage site; replacement of the endogenous recognition site by the Runella site (NRVLGENM) in a number of other bGSDMs is not sufficient for them to be cleaved. The polypeptide is Roc-COR-CHAT protease (Runella zeae (strain ATCC BAA-293 / DSM 19591 / LMG 21438 / NS12)).